The chain runs to 924 residues: DNA repair and recombination protein RDH54 (924 aa).

Over residues 1–10 the composition is skewed to basic and acidic residues; that stretch reads MQIPKYENKP. Disordered regions lie at residues 1-21 and 155-182; these read MQIP…GSNK and EALS…KNDG. A compositionally biased stretch (low complexity) spans 168-178; that stretch reads TTSTTETVPST. The Helicase ATP-binding domain occupies 299 to 487; sequence LENDSDISGC…FTIIDFINPG (189 aa). Residue 346 to 353 coordinates ATP; it reads IPLTGLCK. The short motif at 472–475 is the DEGH box element; that stretch reads NDLN. Lys615 is covalently cross-linked (Glycyl lysine isopeptide (Lys-Gly) (interchain with G-Cter in ubiquitin)). The 160-residue stretch at 631–790 folds into the Helicase C-terminal domain; sequence KLRVLMTLLE…DSEMRNKESS (160 aa).

The protein belongs to the SNF2/RAD54 helicase family. In terms of assembly, interacts with RAD51 and DMC1.

It is found in the nucleus. It carries out the reaction ATP + H2O = ADP + phosphate + H(+). In terms of biological role, involved in the recombinational repair of double-strand breaks (DSB) in DNA during mitosis and meiosis. Has DNA dependent ATPase activity. Promotes D-loop (displacement loop) formation with RAD51 recombinase. Modifies the topology of double-stranded DNA during the D-loop reaction to facilitate the invasion of the homologous duplex molecule by the initiating single-stranded DNA substrate. Required for adaptation from G2/M checkpoint arrest induced by a double strand break, by participating in monitoring the extent of single-stranded DNA produced by resection of DNA ends. This role is distinct from its roles in recombination. Promotes colocalization of RAD51 and DMC1 during meiotic recombination. Involved in crossover interference. The sequence is that of DNA repair and recombination protein RDH54 (RDH54) from Saccharomyces cerevisiae (strain AWRI1631) (Baker's yeast).